Consider the following 336-residue polypeptide: Eukaryotic translation initiation factor 3 subunit I (336 aa).

WD repeat units lie at residues 8-49, 50-91, 93-135, 144-183, 187-226, and 285-324; these read GHER…GTYN, GHNG…KAWE, PTAI…GPQP, PIGSKAQVVAFSSLDKHLITGHENGKVALWDVNTGEEVAS, NHIGLITDLQMSADRTYFVTSSKDKSARLYDSRTLEVIKS, and GGFGPCNSIAVHPEGKGYAIGGEDGYVRLHHFDENTFRAK.

This sequence belongs to the eIF-3 subunit I family. Component of the eukaryotic translation initiation factor 3 (eIF-3) complex.

Its subcellular location is the cytoplasm. In terms of biological role, component of the eukaryotic translation initiation factor 3 (eIF-3) complex, which is involved in protein synthesis of a specialized repertoire of mRNAs and, together with other initiation factors, stimulates binding of mRNA and methionyl-tRNAi to the 40S ribosome. The eIF-3 complex specifically targets and initiates translation of a subset of mRNAs involved in cell proliferation. This is Eukaryotic translation initiation factor 3 subunit I from Puccinia graminis f. sp. tritici (strain CRL 75-36-700-3 / race SCCL) (Black stem rust fungus).